The following is a 256-amino-acid chain: Endonuclease NucS (256 aa).

The segment at A62 to K97 is disordered.

Belongs to the NucS endonuclease family.

Its subcellular location is the cytoplasm. In terms of biological role, cleaves both 3' and 5' ssDNA extremities of branched DNA structures. This Bifidobacterium longum (strain NCC 2705) protein is Endonuclease NucS.